The following is a 365-amino-acid chain: Potassium channel subfamily K member 9 (365 aa).

Over 1-8 (MKKQNVRT) the chain is Cytoplasmic. Residues 9–29 (LSLIACTFTYLLVGAAVFDAL) traverse the membrane as a helical segment. Residues 30 to 88 (ESDHEMREEEKLKAEEIRIRGKYNISTEDYRQLELVILQSEPHRAGVQWKFAGSFYFAI) lie on the Extracellular side of the membrane. Asparagine 53 carries N-linked (GlcNAc...) asparagine glycosylation. Positions 89-101 (TVITTIGYGHAAP) form an intramembrane region, pore-forming. Residues threonine 93, isoleucine 94, glycine 95, and tyrosine 96 each coordinate K(+). The interval 93-98 (TIGYGH) is selectivity filter 1. The Extracellular portion of the chain corresponds to 102–107 (GTDAGK). Residues 108-128 (AFCMFYAVLGIPLTLVMFQSL) form a helical membrane-spanning segment. Residues 129 to 158 (GERMNTFVRYLLKRIKKCCGMRNTEVSMEN) lie on the Cytoplasmic side of the membrane. A helical transmembrane segment spans residues 159–179 (MVTVGFFSCMGTLCIGAAAFS). Topologically, residues 180-194 (QCEEWSFFHAYYYCF) are extracellular. The pore-forming intramembrane region spans 195–207 (ITLTTIGFGDYVA). Residues threonine 199, isoleucine 200, glycine 201, and phenylalanine 202 each contribute to the K(+) site. The selectivity filter 2 stretch occupies residues 199–204 (TIGFGD). Residues 208 to 218 (LQSKGALQRKP) are Extracellular-facing. A helical membrane pass occupies residues 219-239 (FYVAFSFMYILVGLTVIGAFL). Topologically, residues 240–365 (NLVVLRFLTM…HRLMLRRKSV (126 aa)) are cytoplasmic. The segment at 243-248 (VLRFLT) is X-gate.

The protein belongs to the two pore domain potassium channel (TC 1.A.1.8) family. In terms of assembly, homodimer. Heterodimer with KCNK1. Heterodimer with KCNK3. Highly expressed in the brain.

Its subcellular location is the cell membrane. It localises to the mitochondrion inner membrane. The protein localises to the cell projection. It is found in the dendrite. It catalyses the reaction K(+)(in) = K(+)(out). The enzyme catalyses Na(+)(in) = Na(+)(out). Inhibited by extracellular acidification. Functionally, k(+) channel that conducts voltage-dependent outward rectifying currents upon membrane depolarization. Voltage sensing is coupled to K(+) electrochemical gradient in an 'ion flux gating' mode where outward but not inward ion flow opens the gate. Changes ion selectivity and becomes permeable to Na(+) ions in response to extracellular acidification. Protonation of the pH sensor His-98 stabilizes C-type inactivation conformation likely converting the channel from outward K(+)-conducting, to inward Na(+)-conducting to nonconductive state. Homo- and heterodimerizes to form functional channels with distinct regulatory and gating properties. Allows K(+) currents with fast-gating kinetics important for the repolarization and hyperpolarization phases of action potentials. In granule neurons, hyperpolarizes the resting membrane potential to limit intrinsic neuronal excitability, but once the action potential threshold is reached, supports high-frequency action potential firing and increased neuronal excitability. Homomeric and/or heteromeric KCNK3:KCNK9 channels operate in cerebellar granule cells, whereas heteromeric KCNK1:KCNK9 enables currents in hippocampal dentate gyrus granule neurons. Dispensable for central chemosensory respiration i.e. breathing controlled by brainstem CO2/pH, it rather conducts pH-sensitive currents and controls the firing rate of serotonergic raphe neurons involved in potentiation of the respiratory chemoreflex. In retinal ganglion cells, mediates outward rectifying currents that regulate action potentials in response to acidification of the synaptic cleft. Involved in transmission of image-forming and nonimage-forming visual information in the retina. In adrenal gland, contributes to the maintenance of a hyperpolarized resting membrane potential of aldosterone-producing cells at zona glomerulosa and limits aldosterone release as part of a regulatory mechanism that controls arterial blood pressure and electrolyte homeostasis. The protein is Potassium channel subfamily K member 9 (KCNK9) of Cavia porcellus (Guinea pig).